We begin with the raw amino-acid sequence, 471 residues long: UDP-N-acetylmuramoylalanine--D-glutamate ligase (471 aa).

An ATP-binding site is contributed by 120-126 (GSNGKTT).

Belongs to the MurCDEF family.

It localises to the cytoplasm. It catalyses the reaction UDP-N-acetyl-alpha-D-muramoyl-L-alanine + D-glutamate + ATP = UDP-N-acetyl-alpha-D-muramoyl-L-alanyl-D-glutamate + ADP + phosphate + H(+). It functions in the pathway cell wall biogenesis; peptidoglycan biosynthesis. Its function is as follows. Cell wall formation. Catalyzes the addition of glutamate to the nucleotide precursor UDP-N-acetylmuramoyl-L-alanine (UMA). This Nitrosomonas europaea (strain ATCC 19718 / CIP 103999 / KCTC 2705 / NBRC 14298) protein is UDP-N-acetylmuramoylalanine--D-glutamate ligase.